Consider the following 357-residue polypeptide: Serine proteinase inhibitor 1 (357 aa).

This sequence belongs to the serpin family. Poxviruses subfamily.

It localises to the host cytoplasm. Its function is as follows. Plays a role in mediating viral host range. May act to inhibit a caspase independent form of apoptosis to allow efficient virus replication in infected cells. The polypeptide is Serine proteinase inhibitor 1 (OPG208) (Monkeypox virus).